A 417-amino-acid chain; its full sequence is MEQRPRGCAAVAAALLLVLLGARAQGGTRSPRCDCAGDFHKKIGLFCCRGCPAGHYLKAPCTEPCGNSTCLVCPQDTFLAWENHHNSECARCQACDEQASQVALENCSAVADTRCGCKPGWFVECQVSQCVSSSPFYCQPCLDCGALHRHTRLLCSRRDTDCGTCLPGFYEHGDGCVSCPTSTLGSCPERCAAVCGWRQMFWVQVLLAGLVVPLLLGATLTYTYRHCWPHKPLVTADEAGMEALTPPPATHLSPLDSAHTLLAPPDSSEKICTVQLVGNSWTPGYPETQEALCPQVTWSWDQLPSRALGPAAAPTLSPESPAGSPAMMLQPGPQLYDVMDAVPARRWKEFVRTLGLREAEIEAVEVEIGRFRDQQYEMLKRWRQQQPAGLGAVYAALERMGLDGCVEDLRSRLQRGP.

The N-terminal stretch at 1 to 24 (MEQRPRGCAAVAAALLLVLLGARA) is a signal peptide. At 25–199 (QGGTRSPRCD…RCAAVCGWRQ (175 aa)) the chain is on the extracellular side. TNFR-Cys repeat units lie at residues 34–71 (DCAG…STCL), 72–115 (VCPQ…DTRC), 116–163 (GCKP…TDCG), and 164–192 (TCLP…ERCA). Cystine bridges form between C35-C47, C48-C61, C51-C70, C73-C89, C92-C107, C95-C115, C117-C130, C138-C155, C141-C162, C165-C176, C179-C191, and C187-C195. A glycan (N-linked (GlcNAc...) asparagine) is linked at N67. N106 is a glycosylation site (N-linked (GlcNAc...) asparagine). Residues 200–220 (MFWVQVLLAGLVVPLLLGATL) traverse the membrane as a helical segment. Residues 221–417 (TYTYRHCWPH…DLRSRLQRGP (197 aa)) are Cytoplasmic-facing. One can recognise a Death domain in the interval 332-413 (GPQLYDVMDA…GCVEDLRSRL (82 aa)). The (Microbial infection) N-beta-linked (GlcNAc) arginine glycan is linked to R352.

Homodimer. Interacts strongly via the death domains with TNFRSF1 and TRADD to activate at least two distinct signaling cascades, apoptosis and NF-kappa-B signaling. Interacts with BAG4. In terms of processing, (Microbial infection) Glycosylated at Arg-352 by enteropathogenic E.coli protein NleB1. Post-translationally, glycosylated. As to expression, abundantly expressed in thymocytes and lymphocytes. Detected in lymphocyte-rich tissues such as thymus, colon, intestine, and spleen. Also found in the prostate.

It localises to the cell membrane. Its subcellular location is the secreted. Functionally, receptor for TNFSF12/APO3L/TWEAK. Interacts directly with the adapter TRADD. Mediates activation of NF-kappa-B and induces apoptosis. May play a role in regulating lymphocyte homeostasis. The polypeptide is Tumor necrosis factor receptor superfamily member 25 (TNFRSF25) (Homo sapiens (Human)).